Consider the following 123-residue polypeptide: MSNNFKRTDRIAEMIQRKLALIIPQEIKDPRLKGFVTISAVKVAADLGHAKIYFTVLNEDKSVVTNILNGAASYLRSALARSITLRTVPQLHFIYDESIEYGQRLSRLIDEVNPPDSSSDDNN.

The protein belongs to the RbfA family. Monomer. Binds 30S ribosomal subunits, but not 50S ribosomal subunits or 70S ribosomes.

Its subcellular location is the cytoplasm. Its function is as follows. One of several proteins that assist in the late maturation steps of the functional core of the 30S ribosomal subunit. Associates with free 30S ribosomal subunits (but not with 30S subunits that are part of 70S ribosomes or polysomes). Required for efficient processing of 16S rRNA. May interact with the 5'-terminal helix region of 16S rRNA. This is Ribosome-binding factor A from Legionella pneumophila (strain Paris).